An 88-amino-acid polypeptide reads, in one-letter code: Large ribosomal subunit protein bL27 (88 aa).

Positions 1 to 21 (MAHKKGTGSTRNGRDSRAQRL) are disordered.

It belongs to the bacterial ribosomal protein bL27 family.

In Picosynechococcus sp. (strain ATCC 27264 / PCC 7002 / PR-6) (Agmenellum quadruplicatum), this protein is Large ribosomal subunit protein bL27.